A 377-amino-acid chain; its full sequence is TraB domain-containing protein (377 aa).

Met1 carries the N-acetylmethionine modification. Positions 1-34 (MEEPEEQPPHEADTEPVVTSGASEAVPRVLPGDP) are disordered. Position 65 is a phosphothreonine (Thr65).

This chain is TraB domain-containing protein (TRABD), found in Bos taurus (Bovine).